The primary structure comprises 300 residues: tRNA-cytidine(32) 2-sulfurtransferase (300 aa).

Positions 41 to 46 match the PP-loop motif motif; sequence SGGKDS. 3 residues coordinate [4Fe-4S] cluster: C116, C119, and C207.

The protein belongs to the TtcA family. As to quaternary structure, homodimer. The cofactor is Mg(2+). [4Fe-4S] cluster serves as cofactor.

It localises to the cytoplasm. The enzyme catalyses cytidine(32) in tRNA + S-sulfanyl-L-cysteinyl-[cysteine desulfurase] + AH2 + ATP = 2-thiocytidine(32) in tRNA + L-cysteinyl-[cysteine desulfurase] + A + AMP + diphosphate + H(+). It participates in tRNA modification. Functionally, catalyzes the ATP-dependent 2-thiolation of cytidine in position 32 of tRNA, to form 2-thiocytidine (s(2)C32). The sulfur atoms are provided by the cysteine/cysteine desulfurase (IscS) system. This Idiomarina loihiensis (strain ATCC BAA-735 / DSM 15497 / L2-TR) protein is tRNA-cytidine(32) 2-sulfurtransferase.